Here is a 361-residue protein sequence, read N- to C-terminus: Beta-hexosaminidase (361 aa).

Substrate contacts are provided by residues Asp69, Arg77, Arg144, and 174–175 (KH). The Proton donor/acceptor role is filled by His187. The Nucleophile role is filled by Asp258.

This sequence belongs to the glycosyl hydrolase 3 family. NagZ subfamily.

Its subcellular location is the cytoplasm. It catalyses the reaction Hydrolysis of terminal non-reducing N-acetyl-D-hexosamine residues in N-acetyl-beta-D-hexosaminides.. It participates in cell wall biogenesis; peptidoglycan recycling. In terms of biological role, plays a role in peptidoglycan recycling by cleaving the terminal beta-1,4-linked N-acetylglucosamine (GlcNAc) from peptide-linked peptidoglycan fragments, giving rise to free GlcNAc, anhydro-N-acetylmuramic acid and anhydro-N-acetylmuramic acid-linked peptides. The polypeptide is Beta-hexosaminidase (Neisseria meningitidis serogroup A / serotype 4A (strain DSM 15465 / Z2491)).